Reading from the N-terminus, the 792-residue chain is Ribonucleoside-diphosphate reductase large subunit (792 aa).

In terms of domain architecture, ATP-cone spans 1–92 (MHVIKRDGRQ…VSNLHKETKK (92 aa)). ATP-binding positions include 5–6 (KR), 11–17 (ERVMFDK), T53, and D57. Residue K17 is modified to N6-acetyllysine. The GDP site is built by S202 and S217. Residues C218 and C444 are joined by a disulfide bond. DTTP-binding positions include 226–228 (DSI), K243, R256, and 263–264 (AG). An N6-acetyllysine modification is found at K376. N427 lines the GDP pocket. N427 acts as the Proton acceptor in catalysis. The active-site Cysteine radical intermediate is the C429. GDP contacts are provided by residues E431 and 604–607 (TAST). E431 acts as the Proton acceptor in catalysis. The residue at position 751 (T751) is a Phosphothreonine.

It belongs to the ribonucleoside diphosphate reductase large chain family. In terms of assembly, heterodimer of a large and a small subunit. Interacts with RRM2B. Interacts with AHCYL1 which inhibits its activity.

The protein resides in the cytoplasm. The enzyme catalyses a 2'-deoxyribonucleoside 5'-diphosphate + [thioredoxin]-disulfide + H2O = a ribonucleoside 5'-diphosphate + [thioredoxin]-dithiol. Its activity is regulated as follows. Under complex allosteric control mediated by deoxynucleoside triphosphates and ATP binding to separate specificity and activation sites on the M1 subunit. The type of nucleotide bound at the specificity site determines substrate preference. It seems probable that ATP makes the enzyme reduce CDP and UDP, dGTP favors ADP reduction and dTTP favors GDP reduction. Stimulated by ATP and inhibited by dATP binding to the activity site, the dATP inhibition is mediated by AHCYL1 which stabilizes dATP in the site. Its function is as follows. Provides the precursors necessary for DNA synthesis. Catalyzes the biosynthesis of deoxyribonucleotides from the corresponding ribonucleotides. The polypeptide is Ribonucleoside-diphosphate reductase large subunit (Rrm1) (Mus musculus (Mouse)).